A 425-amino-acid chain; its full sequence is Adenylosuccinate synthetase (425 aa).

GTP contacts are provided by residues 12–18 and 40–42; these read GDEGKGK and GHT. Aspartate 13 functions as the Proton acceptor in the catalytic mechanism. Aspartate 13 and glycine 40 together coordinate Mg(2+). Residues 13–16, 38–41, threonine 127, arginine 141, glutamine 222, threonine 237, and arginine 301 contribute to the IMP site; these read DEGK and NAGH. Histidine 41 acts as the Proton donor in catalysis. 297–303 lines the substrate pocket; that stretch reads AVTGRPR. GTP contacts are provided by residues arginine 303, 329–331, and 411–413; these read KID and SVG.

The protein belongs to the adenylosuccinate synthetase family. Homodimer. Mg(2+) is required as a cofactor.

The protein localises to the cytoplasm. The catalysed reaction is IMP + L-aspartate + GTP = N(6)-(1,2-dicarboxyethyl)-AMP + GDP + phosphate + 2 H(+). Its pathway is purine metabolism; AMP biosynthesis via de novo pathway; AMP from IMP: step 1/2. In terms of biological role, plays an important role in the de novo pathway of purine nucleotide biosynthesis. Catalyzes the first committed step in the biosynthesis of AMP from IMP. This chain is Adenylosuccinate synthetase, found in Fusobacterium nucleatum subsp. nucleatum (strain ATCC 25586 / DSM 15643 / BCRC 10681 / CIP 101130 / JCM 8532 / KCTC 2640 / LMG 13131 / VPI 4355).